Consider the following 729-residue polypeptide: Polyribonucleotide nucleotidyltransferase (729 aa).

2 residues coordinate Mg(2+): Asp509 and Asp515. Residues 575–634 (PRVISVKIPVDKIGEVIGPKGKMINQIQADSGAEITVEDDGTIYIGAVDGPSAESARSAI) enclose the KH domain. Residues 646–718 (GERYLGTIVK…SRGKISLSPS (73 aa)) enclose the S1 motif domain.

Belongs to the polyribonucleotide nucleotidyltransferase family. Mg(2+) serves as cofactor.

It localises to the cytoplasm. It carries out the reaction RNA(n+1) + phosphate = RNA(n) + a ribonucleoside 5'-diphosphate. Functionally, involved in mRNA degradation. Catalyzes the phosphorolysis of single-stranded polyribonucleotides processively in the 3'- to 5'-direction. In Frankia casuarinae (strain DSM 45818 / CECT 9043 / HFP020203 / CcI3), this protein is Polyribonucleotide nucleotidyltransferase.